The following is a 375-amino-acid chain: Growth/differentiation factor 8 (375 aa).

Positions 1-23 are cleaved as a signal peptide; it reads MQKLQLCVYIYLFMLIVAGPVDL. Residues 24–266 constitute a propeptide that is removed on maturation; it reads NENSEQKENV…VTDTPKRSRR (243 aa). Asparagine 71 carries an N-linked (GlcNAc...) asparagine glycan. 4 disulfide bridges follow: cysteine 272/cysteine 282, cysteine 281/cysteine 340, cysteine 309/cysteine 372, and cysteine 313/cysteine 374.

The protein belongs to the TGF-beta family. Homodimer; disulfide-linked. Interacts with WFIKKN2, leading to inhibit its activity. Interacts with FSTL3. Synthesized as large precursor molecule that undergoes proteolytic cleavage to generate an N-terminal propeptide and a disulfide linked C-terminal dimer, which is the biologically active molecule. The circulating form consists of a latent complex of the C-terminal dimer and other proteins, including its propeptide, which maintain the C-terminal dimer in a latent, inactive state. Ligand activation requires additional cleavage of the prodomain by a tolloid-like metalloproteinase.

The protein localises to the secreted. Its function is as follows. Acts specifically as a negative regulator of skeletal muscle growth. In Papio hamadryas (Hamadryas baboon), this protein is Growth/differentiation factor 8 (MSTN).